The following is a 260-amino-acid chain: Uroplakin-1b (260 aa).

Residues Ala2–Leu15 are Cytoplasmic-facing. The helical transmembrane segment at Ile16–Phe36 threads the bilayer. Over Val37–Trp60 the chain is Extracellular. A helical membrane pass occupies residues Ile61–Met81. Residues Lys82–Lys86 are Cytoplasmic-facing. Residues Ile87–Ile107 traverse the membrane as a helical segment. Topologically, residues Thr108–His229 are extracellular. A helical transmembrane segment spans residues Ala230–Gly250. Residues Thr251 to Tyr260 lie on the Cytoplasmic side of the membrane.

It belongs to the tetraspanin (TM4SF) family. Heterodimer with uroplakin-3A (UPK3A) or uroplakin-3B (UPK3B). In terms of processing, N-glycosylated with high-mannose oligosaccharides. Bladder epithelium.

It is found in the membrane. Functionally, component of the asymmetric unit membrane (AUM); a highly specialized biomembrane elaborated by terminally differentiated urothelial cells. May play an important role in normal bladder epithelial physiology, possibly in regulating membrane permeability of superficial umbrella cells or in stabilizing the apical membrane through AUM/cytoskeletal interactions. In Bos taurus (Bovine), this protein is Uroplakin-1b (UPK1B).